The following is a 179-amino-acid chain: Large ribosomal subunit protein uL5 (179 aa).

This sequence belongs to the universal ribosomal protein uL5 family. Part of the 50S ribosomal subunit; part of the 5S rRNA/L5/L18/L25 subcomplex. Contacts the 5S rRNA and the P site tRNA. Forms a bridge to the 30S subunit in the 70S ribosome.

In terms of biological role, this is one of the proteins that bind and probably mediate the attachment of the 5S RNA into the large ribosomal subunit, where it forms part of the central protuberance. In the 70S ribosome it contacts protein S13 of the 30S subunit (bridge B1b), connecting the 2 subunits; this bridge is implicated in subunit movement. Contacts the P site tRNA; the 5S rRNA and some of its associated proteins might help stabilize positioning of ribosome-bound tRNAs. This chain is Large ribosomal subunit protein uL5, found in Burkholderia mallei (strain NCTC 10247).